We begin with the raw amino-acid sequence, 98 residues long: NADH-ubiquinone oxidoreductase chain 4L (98 aa).

3 helical membrane passes run 1-21 (MSMVYINIFLAFIMSLMGLLM), 29-49 (SLLCLEGMMLSLFIMMAVAIL), and 61-81 (IILLVFAACEAALGLSLLVMV).

Belongs to the complex I subunit 4L family. As to quaternary structure, core subunit of respiratory chain NADH dehydrogenase (Complex I) which is composed of 45 different subunits.

The protein localises to the mitochondrion inner membrane. It carries out the reaction a ubiquinone + NADH + 5 H(+)(in) = a ubiquinol + NAD(+) + 4 H(+)(out). Its function is as follows. Core subunit of the mitochondrial membrane respiratory chain NADH dehydrogenase (Complex I) which catalyzes electron transfer from NADH through the respiratory chain, using ubiquinone as an electron acceptor. Part of the enzyme membrane arm which is embedded in the lipid bilayer and involved in proton translocation. The sequence is that of NADH-ubiquinone oxidoreductase chain 4L (MT-ND4L) from Felis catus (Cat).